The chain runs to 509 residues: Glutamate--tRNA ligase (509 aa).

Positions 20 to 30 match the 'HIGH' region motif; sequence PSPTGFPHVGT. Residues Cys117, Cys119, Cys144, and His146 each contribute to the Zn(2+) site. A 'KMSKS' region motif is present at residues 261-265; that stretch reads KLSKR. Lys264 is an ATP binding site.

This sequence belongs to the class-I aminoacyl-tRNA synthetase family. Glutamate--tRNA ligase type 1 subfamily. As to quaternary structure, monomer. It depends on Zn(2+) as a cofactor.

It localises to the cytoplasm. It catalyses the reaction tRNA(Glu) + L-glutamate + ATP = L-glutamyl-tRNA(Glu) + AMP + diphosphate. Functionally, catalyzes the attachment of glutamate to tRNA(Glu) in a two-step reaction: glutamate is first activated by ATP to form Glu-AMP and then transferred to the acceptor end of tRNA(Glu). This chain is Glutamate--tRNA ligase, found in Psychrobacter cryohalolentis (strain ATCC BAA-1226 / DSM 17306 / VKM B-2378 / K5).